A 558-amino-acid polypeptide reads, in one-letter code: Thermosome subunit alpha (558 aa).

Residues 536 to 558 (TEKGKKEGGEGAGAETPGAPSLE) form a disordered region. Residues 548–558 (GAETPGAPSLE) show a composition bias toward low complexity.

This sequence belongs to the TCP-1 chaperonin family. As to quaternary structure, forms a Heterooligomeric complex of two stacked eight-membered rings.

Molecular chaperone; binds unfolded polypeptides in vitro, and has a weak ATPase activity. The sequence is that of Thermosome subunit alpha (thsA) from Sulfolobus acidocaldarius (strain ATCC 33909 / DSM 639 / JCM 8929 / NBRC 15157 / NCIMB 11770).